The chain runs to 241 residues: Glutathione S-transferase omega-1 (241 aa).

Serine 2 bears the N-acetylserine mark. The GST N-terminal domain occupies 22–101 (GLIRVYSMRF…YLDEAYPGKK (80 aa)). Catalysis depends on cysteine 32, which acts as the Nucleophile. N6-acetyllysine is present on lysine 57. Residues lysine 59, valine 72, and 85–86 (ES) each bind glutathione. Positions 106–225 (DPYEKACQKM…HIEPRDLRAF (120 aa)) constitute a GST C-terminal domain. 3 positions are modified to N6-acetyllysine: lysine 143, lysine 148, and lysine 152.

In terms of assembly, homodimer. Most abundant in the liver and skeletal muscle; also expressed in heart, diaphragm, colon, thymus, kidney, lung, ovaries, spleen, intestine and pancreas.

The protein localises to the cytoplasm. It is found in the cytosol. It catalyses the reaction RX + glutathione = an S-substituted glutathione + a halide anion + H(+). The enzyme catalyses L-dehydroascorbate + 2 glutathione = glutathione disulfide + L-ascorbate. It carries out the reaction methylarsonate + 2 glutathione + H(+) = methylarsonous acid + glutathione disulfide + H2O. Its function is as follows. Exhibits glutathione-dependent thiol transferase and dehydroascorbate reductase activities. Has S-(phenacyl)glutathione reductase activity. Also has glutathione S-transferase activity. Participates in the biotransformation of inorganic arsenic and reduces monomethylarsonic acid (MMA) and dimethylarsonic acid. The chain is Glutathione S-transferase omega-1 (GSTO1) from Sus scrofa (Pig).